The chain runs to 341 residues: tRNA N6-adenosine threonylcarbamoyltransferase (341 aa).

H115 and H119 together coordinate Fe cation. Substrate contacts are provided by residues 137–141, D170, G183, D187, and N276; that span reads AVSGG. D306 is a binding site for Fe cation.

Belongs to the KAE1 / TsaD family. The cofactor is Fe(2+).

It is found in the cytoplasm. It carries out the reaction L-threonylcarbamoyladenylate + adenosine(37) in tRNA = N(6)-L-threonylcarbamoyladenosine(37) in tRNA + AMP + H(+). In terms of biological role, required for the formation of a threonylcarbamoyl group on adenosine at position 37 (t(6)A37) in tRNAs that read codons beginning with adenine. Is involved in the transfer of the threonylcarbamoyl moiety of threonylcarbamoyl-AMP (TC-AMP) to the N6 group of A37, together with TsaE and TsaB. TsaD likely plays a direct catalytic role in this reaction. This is tRNA N6-adenosine threonylcarbamoyltransferase from Lacticaseibacillus casei (strain BL23) (Lactobacillus casei).